We begin with the raw amino-acid sequence, 731 residues long: DNA gyrase subunit B, chloroplastic/mitochondrial (731 aa).

A Toprim domain is found at 512–619 (AEIFIVEGDS…RYQRALFEEG (108 aa)). Residues glutamate 518, aspartate 592, and aspartate 594 each contribute to the Mg(2+) site.

This sequence belongs to the type II topoisomerase GyrB family. In terms of assembly, made up of two chains. The A chain is responsible for DNA breakage and rejoining; the B chain catalyzes ATP hydrolysis. Mg(2+) is required as a cofactor. It depends on Mn(2+) as a cofactor. The cofactor is Ca(2+). In terms of tissue distribution, ubiquitous.

It localises to the plastid. Its subcellular location is the chloroplast. The protein resides in the mitochondrion. It catalyses the reaction ATP-dependent breakage, passage and rejoining of double-stranded DNA.. Seems to play a critical role in chloroplast nucleoid partitioning by regulating DNA topology. A type II topoisomerase that negatively supercoils closed circular double-stranded DNA in an ATP-dependent manner. This is DNA gyrase subunit B, chloroplastic/mitochondrial (GYRB) from Nicotiana benthamiana.